We begin with the raw amino-acid sequence, 824 residues long: Dapper 1 (824 aa).

5 disordered regions span residues 1–34, 61–80, 131–150, 454–487, and 516–536; these read MKPI…QRTR, ALTP…GDTP, EEHL…LSDG, TSNV…ESTQ, and ASSS…SSSQ. The segment at 2–343 is interaction with tcf7l1; it reads KPIPATPDHL…PVRTNKPRTS (342 aa). A compositionally biased stretch (basic and acidic residues) spans 11–34; it reads LGQHQESPRRKDKGEAESERQRTR. A coiled-coil region spans residues 19-47; sequence RRKDKGEAESERQRTRERLEATLAGLAEL. The span at 520–530 shows a compositional bias: basic and acidic residues; the sequence is FDERPPLDFKS. Positions 821–824 match the PDZ-binding motif; sequence MTTV.

Belongs to the dapper family. Interacts with dbf4, dvl2 and tcf7l1.

The protein resides in the cytoplasm. It is found in the nucleus. Involved in regulation of intracellular signaling pathways during development. Specifically thought to play a role in canonical and/or non-canonical Wnt signaling pathways through interaction with DSH (Dishevelled) family proteins. Binds to dvl2 and regulates the degradation of ctnnb1/beta-catenin, thereby modulating the transcriptional activation of target genes of the Wnt signaling pathway. May also bind to and directly stimulate the activity of tcf7l1. The chain is Dapper 1 (dact1) from Xenopus tropicalis (Western clawed frog).